Reading from the N-terminus, the 655-residue chain is MRQATELDQSIHCASAANLDLVQFAAELCELLVEENFGELFGRIFATLSRYDRLNLPRLKAYSELPNRQLLPALAAMIQQHLVYHYTSYDDGVTYYEANMQSAYYLVRSGKILEFVEERLGKYAATVLSTIMNLGHAQVSYLETLPELTSEAVKANGVSEEHGEHEEGEEQSNGLNGEHSNEQPELLHPTLKALAAHGYIIRVREAQFQSHADNILDAERVIRSKPEMKALKGKRLEEAVIEGTLGLLKERTDGDLTRGLIVHGVPRGAKRKYSSRRADEPNKKPRTDFASVDEIDEQDEEEENEWLDDEMGYDTTPMESGLVVRVNYNKLDVALRNRRFIELAEQGVSPETAEVYECLLRRIEYQTHQCRDTAEIPREGEEGEQYSVPIALSALAEDVDPRLDLSSSTGPMDTSQPDGRRGKRPLESDVDGTNHEGANGLSSGGNRTFEIDQHLSLLAQPPHNLTSKRMVSGLITWTVEFRHLARKLRHLELERMIEARYGDVALRVVRVLHAKGKLDEKRLQEISLLPFKDLRQVLASMQAGGFVDLQEVPRDAQRQPSRTIYLWYYDPDRICNSVLQDTYKAMSRCLQRLRFERSRIKDFLEKTERSDVKGNEQRFLSEPELVLLEQWRAKEALLLGEVARLDEMVAVMRDY.

Disordered regions lie at residues 153–183 (VKANGVSEEHGEHEEGEEQSNGLNGEHSNEQ), 270–305 (KRKYSSRRADEPNKKPRTDFASVDEIDEQDEEEENE), and 402–445 (RLDL…SSGG). The segment covering 276-287 (RRADEPNKKPRT) has biased composition (basic and acidic residues). Acidic residues predominate over residues 291 to 305 (SVDEIDEQDEEEENE). The span at 405-417 (LSSSTGPMDTSQP) shows a compositional bias: polar residues. Basic and acidic residues predominate over residues 418–427 (DGRRGKRPLE). The interval 582–603 (TYKAMSRCLQRLRFERSRIKDF) is leucine-zipper.

This sequence belongs to the RNA polymerase beta chain family. In terms of assembly, component of the RNA polymerase III (Pol III) complex consisting of 17 subunits.

The protein resides in the nucleus. Functionally, DNA-dependent RNA polymerase catalyzes the transcription of DNA into RNA using the four ribonucleoside triphosphates as substrates. Specific core component of RNA polymerase III which synthesizes small RNAs, such as 5S rRNA and tRNAs. In Neosartorya fischeri (strain ATCC 1020 / DSM 3700 / CBS 544.65 / FGSC A1164 / JCM 1740 / NRRL 181 / WB 181) (Aspergillus fischerianus), this protein is DNA-directed RNA polymerase III subunit rpc3 (rpc82).